The following is a 333-amino-acid chain: Tubulin alpha chain (333 aa).

6 residues coordinate GTP: S48, G52, T53, T88, N115, and N137.

The protein belongs to the tubulin family. As to quaternary structure, dimer of alpha and beta chains. A typical microtubule is a hollow water-filled tube with an outer diameter of 25 nm and an inner diameter of 15 nM. Alpha-beta heterodimers associate head-to-tail to form protofilaments running lengthwise along the microtubule wall with the beta-tubulin subunit facing the microtubule plus end conferring a structural polarity. Microtubules usually have 13 protofilaments but different protofilament numbers can be found in some organisms and specialized cells. Requires Mg(2+) as cofactor. Undergoes a tyrosination/detyrosination cycle, the cyclic removal and re-addition of a C-terminal tyrosine residue by the enzymes tubulin tyrosine carboxypeptidase (TTCP) and tubulin tyrosine ligase (TTL), respectively.

It localises to the cytoplasm. Its subcellular location is the cytoskeleton. The enzyme catalyses GTP + H2O = GDP + phosphate + H(+). Its function is as follows. Tubulin is the major constituent of microtubules, a cylinder consisting of laterally associated linear protofilaments composed of alpha- and beta-tubulin heterodimers. Microtubules grow by the addition of GTP-tubulin dimers to the microtubule end, where a stabilizing cap forms. Below the cap, tubulin dimers are in GDP-bound state, owing to GTPase activity of alpha-tubulin. In Dictyostelium purpureum (Slime mold), this protein is Tubulin alpha chain (tuba).